Reading from the N-terminus, the 311-residue chain is Putative dihydroorotate dehydrogenase A (fumarate) (311 aa).

Substrate contacts are provided by residues lysine 45, 69 to 73, and asparagine 128; that span reads NSMGL. 45–46 lines the FMN pocket; it reads KT. Position 128 (asparagine 128) interacts with FMN. Cysteine 131 serves as the catalytic Nucleophile. Positions 165 and 193 each coordinate FMN. Residue 194-195 participates in substrate binding; that stretch reads NS. Residues glycine 220, 248–249, and 270–271 each bind FMN; these read GG and GT.

This sequence belongs to the dihydroorotate dehydrogenase family. Type 1 subfamily. In terms of assembly, homodimer. FMN serves as cofactor.

It localises to the cytoplasm. It catalyses the reaction (S)-dihydroorotate + fumarate = orotate + succinate. It functions in the pathway pyrimidine metabolism; UMP biosynthesis via de novo pathway. Its function is as follows. Catalyzes the conversion of dihydroorotate to orotate with fumarate as the electron acceptor. In Streptococcus pyogenes serotype M18 (strain MGAS8232), this protein is Putative dihydroorotate dehydrogenase A (fumarate) (pyrD).